The following is a 373-amino-acid chain: Glutamine synthetase (373 aa).

An N-acetylalanine modification is found at Ala-2. Residues 2–25 (ATSASSHLNKGIKQMYMSLPQGEK) form a required for glutamine-induced ubiquitination by CRL4(CRBN) and proteasomal degradation region. N6-acetyllysine is present on residues Lys-11 and Lys-14. The GS beta-grasp domain maps to 24-106 (EKVQAMYIWV…VFCEVFKYNQ (83 aa)). Tyr-104 is modified (phosphotyrosine). In terms of domain architecture, GS catalytic spans 113-373 (LRHTCKRIMD…TGDQPFQYKN (261 aa)). Glu-134 lines the ATP pocket. Residues Glu-134, Glu-136, Glu-196, and Glu-203 each contribute to the Mn(2+) site. ATP is bound at residue 203 to 208 (EFQIGP). 246 to 247 (NW) contacts L-glutamate. His-253 contributes to the Mn(2+) binding site. Residues 255 to 257 (NFS), Arg-319, and Arg-324 contribute to the ATP site. Arg-319 is an L-glutamate binding site. Residue 336 to 338 (YFE) participates in ADP binding. Glu-338 lines the Mn(2+) pocket. Arg-340 contacts L-glutamate. Ser-343 carries the phosphoserine modification.

The protein belongs to the glutamine synthetase family. As to quaternary structure, decamer; composed of two pentamers. Interacts with PALMD. Interacts with RHOJ. Interacts with BEST2; this interaction tethers a fraction of GLUL to the membrane, causing a decrease of cytosolic glutamine synthase (GS) activity and inhibits the chloride channel activity of BEST2 by affecting the gating at the aperture in the absence of intracellular glutamate. The cofactor is Mg(2+). Mn(2+) is required as a cofactor. In terms of processing, palmitoylated; undergoes autopalmitoylation. Post-translationally, acetylated by EP300/p300; acetylation is stimulated by increased glutamine levels and promotes ubiquitin-mediated proteasomal degradation. Ubiquitinated by ZNRF1. Ubiquitinated by the DCX (DDB1-CUL4-X-box) E3 ubiquitin-protein ligase complex called CRL4(CRBN), leading to proteasomal degradation.

The protein resides in the cytoplasm. It localises to the cytosol. Its subcellular location is the microsome. The protein localises to the mitochondrion. It is found in the cell membrane. The enzyme catalyses L-glutamate + NH4(+) + ATP = L-glutamine + ADP + phosphate + H(+). The catalysed reaction is L-cysteinyl-[protein] + hexadecanoyl-CoA = S-hexadecanoyl-L-cysteinyl-[protein] + CoA. Glutamine synthetase activity is inhibited by methionine sulfoximine (MSO). Its function is as follows. Glutamine synthetase that catalyzes the ATP-dependent conversion of glutamate and ammonia to glutamine. Its role depends on tissue localization: in the brain, it regulates the levels of toxic ammonia and converts neurotoxic glutamate to harmless glutamine, whereas in the liver, it is one of the enzymes responsible for the removal of ammonia. Plays a key role in ammonium detoxification during erythropoiesis: the glutamine synthetase activity is required to remove ammonium generated by porphobilinogen deaminase (HMBS) during heme biosynthesis to prevent ammonium accumulation and oxidative stress. Essential for proliferation of fetal skin fibroblasts. Independently of its glutamine synthetase activity, required for endothelial cell migration during vascular development. Involved in angiogenesis by regulating membrane localization and activation of the GTPase RHOJ, possibly by promoting RHOJ palmitoylation. May act as a palmitoyltransferase for RHOJ: able to autopalmitoylate and then transfer the palmitoyl group to RHOJ. Plays a role in ribosomal 40S subunit biogenesis. Through the interaction with BEST2, inhibits BEST2 channel activity by affecting the gating at the aperture in the absence of intracellular L-glutamate, but sensitizes BEST2 to intracellular L-glutamate, which promotes the opening of BEST2 and thus relieves its inhibitory effect on BEST2. This is Glutamine synthetase from Cricetulus griseus (Chinese hamster).